The sequence spans 185 residues: Ribosome-recycling factor (185 aa).

The protein belongs to the RRF family.

Its subcellular location is the cytoplasm. In terms of biological role, responsible for the release of ribosomes from messenger RNA at the termination of protein biosynthesis. May increase the efficiency of translation by recycling ribosomes from one round of translation to another. This chain is Ribosome-recycling factor, found in Salmonella arizonae (strain ATCC BAA-731 / CDC346-86 / RSK2980).